The following is a 214-amino-acid chain: Chaperone protein TorD (214 aa).

This sequence belongs to the TorD/DmsD family. TorD subfamily.

The protein resides in the cytoplasm. In terms of biological role, involved in the biogenesis of TorA. Acts on TorA before the insertion of the molybdenum cofactor and, as a result, probably favors a conformation of the apoenzyme that is competent for acquiring the cofactor. The chain is Chaperone protein TorD from Aeromonas salmonicida (strain A449).